The sequence spans 226 residues: Thiamine-phosphate synthase (226 aa).

4-amino-2-methyl-5-(diphosphooxymethyl)pyrimidine-binding positions include 46–50 (QLRDK) and Asn87. The Mg(2+) site is built by Asp88 and Asp107. Residue Ser126 coordinates 4-amino-2-methyl-5-(diphosphooxymethyl)pyrimidine. 152 to 154 (TPT) lines the 2-[(2R,5Z)-2-carboxy-4-methylthiazol-5(2H)-ylidene]ethyl phosphate pocket. A 4-amino-2-methyl-5-(diphosphooxymethyl)pyrimidine-binding site is contributed by Lys155. Residue Gly183 participates in 2-[(2R,5Z)-2-carboxy-4-methylthiazol-5(2H)-ylidene]ethyl phosphate binding.

It belongs to the thiamine-phosphate synthase family. Mg(2+) serves as cofactor.

The enzyme catalyses 2-[(2R,5Z)-2-carboxy-4-methylthiazol-5(2H)-ylidene]ethyl phosphate + 4-amino-2-methyl-5-(diphosphooxymethyl)pyrimidine + 2 H(+) = thiamine phosphate + CO2 + diphosphate. The catalysed reaction is 2-(2-carboxy-4-methylthiazol-5-yl)ethyl phosphate + 4-amino-2-methyl-5-(diphosphooxymethyl)pyrimidine + 2 H(+) = thiamine phosphate + CO2 + diphosphate. It catalyses the reaction 4-methyl-5-(2-phosphooxyethyl)-thiazole + 4-amino-2-methyl-5-(diphosphooxymethyl)pyrimidine + H(+) = thiamine phosphate + diphosphate. The protein operates within cofactor biosynthesis; thiamine diphosphate biosynthesis; thiamine phosphate from 4-amino-2-methyl-5-diphosphomethylpyrimidine and 4-methyl-5-(2-phosphoethyl)-thiazole: step 1/1. Its function is as follows. Condenses 4-methyl-5-(beta-hydroxyethyl)thiazole monophosphate (THZ-P) and 2-methyl-4-amino-5-hydroxymethyl pyrimidine pyrophosphate (HMP-PP) to form thiamine monophosphate (TMP). This is Thiamine-phosphate synthase from Mycobacterium sp. (strain KMS).